The sequence spans 255 residues: Phosphoribosylaminoimidazole-succinocarboxamide synthase A (255 aa).

It belongs to the SAICAR synthetase family.

The enzyme catalyses 5-amino-1-(5-phospho-D-ribosyl)imidazole-4-carboxylate + L-aspartate + ATP = (2S)-2-[5-amino-1-(5-phospho-beta-D-ribosyl)imidazole-4-carboxamido]succinate + ADP + phosphate + 2 H(+). It functions in the pathway purine metabolism; IMP biosynthesis via de novo pathway; 5-amino-1-(5-phospho-D-ribosyl)imidazole-4-carboxamide from 5-amino-1-(5-phospho-D-ribosyl)imidazole-4-carboxylate: step 1/2. The protein is Phosphoribosylaminoimidazole-succinocarboxamide synthase A (purC1) of Bradyrhizobium diazoefficiens (strain JCM 10833 / BCRC 13528 / IAM 13628 / NBRC 14792 / USDA 110).